The sequence spans 172 residues: Translationally-controlled tumor protein homolog (172 aa).

The 172-residue stretch at 1-172 (MIIYRDCISQ…FKDGLEMEKC (172 aa)) folds into the TCTP domain.

This sequence belongs to the TCTP family. Expressed by the venom gland.

Its subcellular location is the secreted. Venom protein that causes edema, enhances vascular permeability and is likely related to the inflammatory activity of the venom. This chain is Translationally-controlled tumor protein homolog, found in Crotalus adamanteus (Eastern diamondback rattlesnake).